We begin with the raw amino-acid sequence, 337 residues long: Probable RuBisCO transcriptional regulator (337 aa).

Residues 6–63 (FTLDQLRILKAIAVEGSFKRAADSLYVSQPAVSLQVQNLERQLDVPLFDRGGRRAQLT) form the HTH lysR-type domain. Residues 23–42 (FKRAADSLYVSQPAVSLQVQ) constitute a DNA-binding region (H-T-H motif).

This sequence belongs to the LysR transcriptional regulatory family.

Trans-acting transcriptional regulator of RuBisCO genes (rbcL and rbcS) expression. The polypeptide is Probable RuBisCO transcriptional regulator (rbcR) (Trichormus variabilis (strain ATCC 29413 / PCC 7937) (Anabaena variabilis)).